Consider the following 245-residue polypeptide: Protein DEHYDRATION-INDUCED 19 homolog 4 (245 aa).

Belongs to the Di19 family.

This chain is Protein DEHYDRATION-INDUCED 19 homolog 4 (DI19-4), found in Oryza sativa subsp. japonica (Rice).